A 153-amino-acid polypeptide reads, in one-letter code: Putative ATP synthase subunit f, mitochondrial (153 aa).

Belongs to the ATPase F chain family. In terms of assembly, subunit of the F-type ATPase which has 2 components, CF(1) - the catalytic core - and CF(0) - the membrane proton channel.

Its subcellular location is the mitochondrion membrane. Mitochondrial membrane ATP synthase (F(1)F(0) ATP synthase or Complex V) produces ATP from ADP in the presence of a proton gradient across the membrane which is generated by electron transport complexes of the respiratory chain. F-type ATPases consist of two structural domains, F(1) - containing the extramembraneous catalytic core and F(0) - containing the membrane proton channel, linked together by a central stalk and a peripheral stalk. During catalysis, ATP synthesis in the catalytic domain of F(1) is coupled via a rotary mechanism of the central stalk subunits to proton translocation. Part of the complex F(0) domain. Minor subunit located with subunit a in the membrane. The protein is Putative ATP synthase subunit f, mitochondrial of Caenorhabditis elegans.